The sequence spans 148 residues: Suppressor APC domain-containing protein 1 (148 aa).

Positions 120–148 (SRQQKGVTQPKEEMAQRGCTKGPRGPTRV) are disordered.

The chain is Suppressor APC domain-containing protein 1 (SAPCD1) from Homo sapiens (Human).